The primary structure comprises 409 residues: Serine/threonine transporter SstT (409 aa).

9 helical membrane passes run 17-37 (LVGQIIVGLIAGLLLASFFPA), 49-69 (FVSALKAVAPVLVFVLVMASI), 83-103 (ILLLYLVGTFSAAVVAVIASF), 142-162 (ALISANFIGILAWAIGLGIAF), 180-200 (VSLIVKVVIRFAPLGIFGLVA), 218-238 (LVVLLGCMLFVAFVVNPLIVF), 301-321 (GAAITITVLTLAAVHTLGIAV), 331-351 (VVASVCACGASGVAGGSLLLI), and 357-377 (LFGIPSEVAMQVVAVGFIIAI).

The protein belongs to the dicarboxylate/amino acid:cation symporter (DAACS) (TC 2.A.23) family.

Its subcellular location is the cell inner membrane. The catalysed reaction is L-serine(in) + Na(+)(in) = L-serine(out) + Na(+)(out). It catalyses the reaction L-threonine(in) + Na(+)(in) = L-threonine(out) + Na(+)(out). Its function is as follows. Involved in the import of serine and threonine into the cell, with the concomitant import of sodium (symport system). The sequence is that of Serine/threonine transporter SstT from Pseudomonas aeruginosa (strain UCBPP-PA14).